Here is a 640-residue protein sequence, read N- to C-terminus: Chaperone protein DnaK (640 aa).

T196 carries the post-translational modification Phosphothreonine; by autocatalysis. Disordered stretches follow at residues 510-530 and 598-640; these read NDAKAHAEEDAKRKEEVETKN and AADA…DKDK.

This sequence belongs to the heat shock protein 70 family.

In terms of biological role, acts as a chaperone. In Prosthecochloris aestuarii (strain DSM 271 / SK 413), this protein is Chaperone protein DnaK.